The primary structure comprises 319 residues: Acetyl-coenzyme A carboxylase carboxyl transferase subunit alpha (319 aa).

One can recognise a CoA carboxyltransferase C-terminal domain in the interval 38-293 (HALQDKLRLR…KAVLLNELDA (256 aa)).

It belongs to the AccA family. As to quaternary structure, acetyl-CoA carboxylase is a heterohexamer composed of biotin carboxyl carrier protein (AccB), biotin carboxylase (AccC) and two subunits each of ACCase subunit alpha (AccA) and ACCase subunit beta (AccD).

It localises to the cytoplasm. It carries out the reaction N(6)-carboxybiotinyl-L-lysyl-[protein] + acetyl-CoA = N(6)-biotinyl-L-lysyl-[protein] + malonyl-CoA. Its pathway is lipid metabolism; malonyl-CoA biosynthesis; malonyl-CoA from acetyl-CoA: step 1/1. Functionally, component of the acetyl coenzyme A carboxylase (ACC) complex. First, biotin carboxylase catalyzes the carboxylation of biotin on its carrier protein (BCCP) and then the CO(2) group is transferred by the carboxyltransferase to acetyl-CoA to form malonyl-CoA. The sequence is that of Acetyl-coenzyme A carboxylase carboxyl transferase subunit alpha from Stenotrophomonas maltophilia (strain R551-3).